A 253-amino-acid chain; its full sequence is ATP synthase subunit a (253 aa).

6 consecutive transmembrane segments (helical) span residues 27 to 47 (ISFTNASGFMLLGVVLVIGFF), 87 to 107 (FFPFVFTLFFFILFANLIGMV), 117 to 137 (IIVTGALAMTVILMVIVVGLI), 146 to 166 (LFAPSGAPLPIYIILTPIEII), 196 to 216 (FTVMLIGAGAIYIPVAALAFA), and 224 to 244 (LEFLVAGLQAYVFAILTCVYL).

Belongs to the ATPase A chain family. In terms of assembly, F-type ATPases have 2 components, CF(1) - the catalytic core - and CF(0) - the membrane proton channel. CF(1) has five subunits: alpha(3), beta(3), gamma(1), delta(1), epsilon(1). CF(0) has three main subunits: a(1), b(2) and c(9-12). The alpha and beta chains form an alternating ring which encloses part of the gamma chain. CF(1) is attached to CF(0) by a central stalk formed by the gamma and epsilon chains, while a peripheral stalk is formed by the delta and b chains.

The protein resides in the cell inner membrane. Key component of the proton channel; it plays a direct role in the translocation of protons across the membrane. This chain is ATP synthase subunit a, found in Hyphomonas neptunium (strain ATCC 15444).